A 246-amino-acid polypeptide reads, in one-letter code: N-alpha-acetyltransferase 11 (246 aa).

The segment at Met1–Ala58 is interaction with NAA15. The N-acetyltransferase domain maps to Met1–Ala152. The interval Glu175–Ser246 is disordered. A compositionally biased stretch (polar residues) spans Ser230–Ser246.

This sequence belongs to the acetyltransferase family. ARD1 subfamily. Component of the N-terminal acetyltransferase A (NatA) complex composed of NAA11 and NAA15. Interacts with HIF1A.

Its subcellular location is the cytoplasm. The protein resides in the nucleus. It catalyses the reaction N-terminal glycyl-[protein] + acetyl-CoA = N-terminal N(alpha)-acetylglycyl-[protein] + CoA + H(+). The enzyme catalyses N-terminal L-alanyl-[protein] + acetyl-CoA = N-terminal N(alpha)-acetyl-L-alanyl-[protein] + CoA + H(+). The catalysed reaction is N-terminal L-seryl-[protein] + acetyl-CoA = N-terminal N(alpha)-acetyl-L-seryl-[protein] + CoA + H(+). It carries out the reaction N-terminal L-valyl-[protein] + acetyl-CoA = N-terminal N(alpha)-acetyl-L-valyl-[protein] + CoA + H(+). It catalyses the reaction N-terminal L-cysteinyl-[protein] + acetyl-CoA = N-terminal N(alpha)-acetyl-L-cysteinyl-[protein] + CoA + H(+). The enzyme catalyses N-terminal L-threonyl-[protein] + acetyl-CoA = N-terminal N(alpha)-acetyl-L-threonyl-[protein] + CoA + H(+). Its function is as follows. Displays alpha (N-terminal) acetyltransferase activity. Proposed alternative catalytic subunit of the N-terminal acetyltransferase A (NatA) complex. In Rattus norvegicus (Rat), this protein is N-alpha-acetyltransferase 11 (Naa11).